The primary structure comprises 199 residues: Putative 3-methyladenine DNA glycosylase (199 aa).

This sequence belongs to the DNA glycosylase MPG family.

The chain is Putative 3-methyladenine DNA glycosylase from Chlorobium phaeobacteroides (strain BS1).